A 410-amino-acid chain; its full sequence is Regulator of microtubule dynamics protein 2 (410 aa).

A helical transmembrane segment spans residues 10–27 (IFGIMVGTAGISLLLLWY). Serine 51 is modified (phosphoserine). A coiled-coil region spans residues 68–110 (FQERQLQILEKLNELLTNMEELKEEIRFLKETVPKLEEYIQDE). The residue at position 121 (serine 121) is a Phosphoserine. Residues 122–131 (PQHRARKRRL) are compositionally biased toward basic residues. Positions 122–151 (PQHRARKRRLPTIQSSATSNSSEEAESEGG) are disordered. Threonine 139 bears the Phosphothreonine mark. Tyrosine 152 carries the phosphotyrosine modification. Threonine 154 and threonine 157 each carry phosphothreonine.

It belongs to the RMDN family. Interacts with microtubules.

Its subcellular location is the membrane. It is found in the cytoplasm. The protein localises to the cytoskeleton. The protein resides in the spindle. It localises to the spindle pole. In Macaca fascicularis (Crab-eating macaque), this protein is Regulator of microtubule dynamics protein 2 (RMDN2).